Consider the following 203-residue polypeptide: Imidazole glycerol phosphate synthase subunit HisH (203 aa).

A Glutamine amidotransferase type-1 domain is found at 1–203 (MIGIIDYGMG…KNFGEMIKCL (203 aa)). Catalysis depends on Cys-79, which acts as the Nucleophile. Catalysis depends on residues His-181 and Glu-183.

Heterodimer of HisH and HisF.

The protein localises to the cytoplasm. The enzyme catalyses 5-[(5-phospho-1-deoxy-D-ribulos-1-ylimino)methylamino]-1-(5-phospho-beta-D-ribosyl)imidazole-4-carboxamide + L-glutamine = D-erythro-1-(imidazol-4-yl)glycerol 3-phosphate + 5-amino-1-(5-phospho-beta-D-ribosyl)imidazole-4-carboxamide + L-glutamate + H(+). It catalyses the reaction L-glutamine + H2O = L-glutamate + NH4(+). The protein operates within amino-acid biosynthesis; L-histidine biosynthesis; L-histidine from 5-phospho-alpha-D-ribose 1-diphosphate: step 5/9. In terms of biological role, IGPS catalyzes the conversion of PRFAR and glutamine to IGP, AICAR and glutamate. The HisH subunit catalyzes the hydrolysis of glutamine to glutamate and ammonia as part of the synthesis of IGP and AICAR. The resulting ammonia molecule is channeled to the active site of HisF. This is Imidazole glycerol phosphate synthase subunit HisH from Caldanaerobacter subterraneus subsp. tengcongensis (strain DSM 15242 / JCM 11007 / NBRC 100824 / MB4) (Thermoanaerobacter tengcongensis).